The following is a 230-amino-acid chain: Translation initiation factor IF-3 (230 aa).

Disordered stretches follow at residues 1–21 (MAIQ…RTNR) and 184–230 (LQSQ…AAQR). The segment covering 193-208 (AAAAAAPAAAPAAGAP) has biased composition (low complexity). The segment covering 209-220 (APAPAPAAPAPA) has biased composition (pro residues). Residues 221-230 (PTAADPAAQR) show a composition bias toward low complexity.

This sequence belongs to the IF-3 family. As to quaternary structure, monomer.

It localises to the cytoplasm. IF-3 binds to the 30S ribosomal subunit and shifts the equilibrium between 70S ribosomes and their 50S and 30S subunits in favor of the free subunits, thus enhancing the availability of 30S subunits on which protein synthesis initiation begins. The sequence is that of Translation initiation factor IF-3 from Anaeromyxobacter dehalogenans (strain 2CP-1 / ATCC BAA-258).